The chain runs to 1770 residues: AF4/FMR2 family member lilli (1770 aa).

3 stretches are compositionally biased toward low complexity: residues 1-19, 154-204, and 227-269; these read MAQQ…HPHQ, LGHS…YLKQ, and PSSS…GTTP. 6 disordered regions span residues 1–28, 134–327, 402–660, 761–805, 822–1173, and 1291–1390; these read MAQQ…NQLQ, SRHA…EKDI, TSLL…PGNV, LHSA…LQLP, MQKA…KQGQ, and KHEH…QISK. Residues 402–414 show a composition bias toward polar residues; the sequence is TSLLTTPPHASQG. Over residues 434–447 the composition is skewed to low complexity; it reads KAAAALSPTAAAKP. Positions 448-461 are enriched in basic and acidic residues; that stretch reads LKTEKNHTLEKQDS. A compositionally biased stretch (acidic residues) spans 463–474; that stretch reads LENDLELSESED. 2 positions are modified to phosphoserine: Ser-470 and Ser-472. A compositionally biased stretch (low complexity) spans 483 to 503; that stretch reads SAGNSSNSSESDSSESGSESS. The segment covering 511-520 has biased composition (basic residues); that stretch reads QHHHHNHHHQ. The span at 521–552 shows a compositional bias: low complexity; it reads QQQQQLQQQQQQQLLQQKQQHQQILQQQQRQL. A compositionally biased stretch (gly residues) spans 582-614; the sequence is FGSGGAGNGGCSTASSGGGGGGSGSGGGSGSSS. Low complexity predominate over residues 615–625; that stretch reads GIGTMSSGSSS. Polar residues-rich tracts occupy residues 626–638 and 647–659; these read NKTP…NKWT and ANQT…SPGN. Positions 768–800 are enriched in low complexity; that stretch reads SDSGTSGSGSTSSSSSSSDSAPGEVVPMPGPGE. Basic residues predominate over residues 844 to 854; that stretch reads QRQKKPRKKKP. Phosphoserine is present on residues Ser-863 and Ser-864. 5 stretches are compositionally biased toward low complexity: residues 880-893, 909-928, 994-1028, 1071-1081, and 1111-1131; these read AAAA…ATAT, QQQS…SSSQ, ANAS…SSSS, SGSSSPSSSSS, and SQHS…SSTS. A DNA-binding region (a.T hook) is located at residues 900–912; the sequence is KKGRGRPRKQQQS. Phosphoserine is present on residues Ser-920 and Ser-922. 2 stretches are compositionally biased toward basic and acidic residues: residues 1295–1312 and 1321–1355; these read PHPV…ESKF and FQLK…EREQ. The residue at position 1442 (Ser-1442) is a Phosphoserine. 2 stretches are compositionally biased toward low complexity: residues 1483-1499 and 1656-1676; these read AAAT…TSTA and GNTP…SGSN. 2 disordered regions span residues 1483–1502 and 1656–1683; these read AAAT…APPA and GNTP…GKIV.

It belongs to the AF4 family.

Its subcellular location is the nucleus. Its function is as follows. Has a role in transcriptional regulation. Acts in parallel with the Ras/MAPK and the PI3K/PKB pathways in the control of cell identity and cellular growth. Essential for regulation of the cytoskeleton and cell growth but not for cell proliferation or growth rate. Required specifically for the microtubule-based basal transport of lipid droplets. Plays a partially redundant function downstream of Raf in cell fate specification in the developing eye. Pair-rule protein that regulates embryonic cellularization, gastrulation and segmentation. The sequence is that of AF4/FMR2 family member lilli from Drosophila pseudoobscura pseudoobscura (Fruit fly).